Consider the following 566-residue polypeptide: Proline--tRNA ligase (566 aa).

The protein belongs to the class-II aminoacyl-tRNA synthetase family. ProS type 1 subfamily. As to quaternary structure, homodimer.

The protein resides in the cytoplasm. The enzyme catalyses tRNA(Pro) + L-proline + ATP = L-prolyl-tRNA(Pro) + AMP + diphosphate. Functionally, catalyzes the attachment of proline to tRNA(Pro) in a two-step reaction: proline is first activated by ATP to form Pro-AMP and then transferred to the acceptor end of tRNA(Pro). As ProRS can inadvertently accommodate and process non-cognate amino acids such as alanine and cysteine, to avoid such errors it has two additional distinct editing activities against alanine. One activity is designated as 'pretransfer' editing and involves the tRNA(Pro)-independent hydrolysis of activated Ala-AMP. The other activity is designated 'posttransfer' editing and involves deacylation of mischarged Ala-tRNA(Pro). The misacylated Cys-tRNA(Pro) is not edited by ProRS. This is Proline--tRNA ligase from Bacillus cereus (strain Q1).